We begin with the raw amino-acid sequence, 367 residues long: Alanine racemase (367 aa).

Residue K40 is the Proton acceptor; specific for D-alanine of the active site. K40 carries the post-translational modification N6-(pyridoxal phosphate)lysine. Substrate is bound at residue R136. Y263 acts as the Proton acceptor; specific for L-alanine in catalysis. M310 is a substrate binding site.

It belongs to the alanine racemase family. Requires pyridoxal 5'-phosphate as cofactor.

The enzyme catalyses L-alanine = D-alanine. Its pathway is amino-acid biosynthesis; D-alanine biosynthesis; D-alanine from L-alanine: step 1/1. Functionally, catalyzes the interconversion of L-alanine and D-alanine. May also act on other amino acids. This Streptococcus pneumoniae (strain 70585) protein is Alanine racemase (alr).